The sequence spans 748 residues: Structure-specific endonuclease subunit SLX4 (748 aa).

The interval 50-102 (LSSDDDSISTQVKSVTAQKSPITQETTKNDTERNKDVDKSCNPVSTSQPDLGE) is disordered. Residues 57 to 75 (ISTQVKSVTAQKSPITQET) are compositionally biased toward polar residues. Position 72 is a phosphothreonine; by ATR and ATM (Thr72). The segment covering 76–88 (TKNDTERNKDVDK) has biased composition (basic and acidic residues). Thr113 is modified (phosphothreonine; by ATR and ATM). Disordered regions lie at residues 215 to 236 (IKTQ…KGEK) and 277 to 303 (EKSS…PPEL). Residues 222–236 (NSDKPPRARNNKGEK) are compositionally biased toward basic and acidic residues. Residues 277-291 (EKSSSSLDNQESSQQ) show a composition bias toward low complexity. Position 289 is a phosphoserine; by ATR and ATM (Ser289). Thr319 is subject to Phosphothreonine; by ATR and ATM. Residues Ser329 and Ser355 each carry the phosphoserine; by ATR and ATM modification.

The protein belongs to the SLX4 family. As to quaternary structure, forms a heterodimer with SLX1. Interacts with RAD1; catalytic subunit of the RAD1-RAD10 endonuclease. Interacts with RTT107. Phosphorylated by ATR (MEC1) and ATM (TEL1) upon DNA damage. This appears to be required for the function with the RAD1-RAD10 endonuclease.

Its subcellular location is the nucleus. The protein localises to the cytoplasm. In terms of biological role, regulatory subunit that interacts with and increases the activity of different structure-specific endonucleases. Has several distinct roles in protecting genome stability by resolving diverse forms of deleterious DNA structures. Component of the SLX1-SLX4 structure-specific endonuclease that resolves DNA secondary structures generated during DNA repair and recombination. Has endonuclease activity towards branched DNA substrates, introducing single-strand cuts in duplex DNA close to junctions with ss-DNA. Has a preference for simple Y, 5'-flap and replication fork-like structures. It cleaves the strand bearing the 5'-non-homologous arm at the branch site junction and generates ligatable, nicked products from the 5'-flap or replication fork substrates. Plays a critical role in maintaining the integrity of the ribosomal DNA (rDNA) loci, where it has a role in re-starting stalled replication forks. Has Holliday junction resolvase activity in vitro. Interacts with the structure-specific RAD1-RAD10 endonuclease and promotes RAD1-RAD10-dependent 3'-non-homologous tail removal (NHTR) during repair of double-strand breaks by single-strand annealing. SLX4 also promotes recovery from DNA-alkylation-induced replisome stalling during DNA replication by facilitating the error-free mode of lesion bypass. This does not require SLX1 or RAD1-RAD10, but probably RTT107. This chain is Structure-specific endonuclease subunit SLX4, found in Saccharomyces cerevisiae (strain YJM789) (Baker's yeast).